The chain runs to 148 residues: Lysozyme C (148 aa).

Positions 1–18 (MKAVIILGLVLLSVTVQG) are cleaved as a signal peptide. Residues 19-148 (KIFERCELAR…VSQYVQGCGV (130 aa)) enclose the C-type lysozyme domain. 4 cysteine pairs are disulfide-bonded: Cys-24–Cys-146, Cys-48–Cys-134, Cys-83–Cys-99, and Cys-95–Cys-113. Residues Glu-53 and Asp-71 contribute to the active site.

It belongs to the glycosyl hydrolase 22 family. As to quaternary structure, monomer.

The protein resides in the secreted. It carries out the reaction Hydrolysis of (1-&gt;4)-beta-linkages between N-acetylmuramic acid and N-acetyl-D-glucosamine residues in a peptidoglycan and between N-acetyl-D-glucosamine residues in chitodextrins.. In terms of biological role, lysozymes have primarily a bacteriolytic function; those in tissues and body fluids are associated with the monocyte-macrophage system and enhance the activity of immunoagents. This Macaca mulatta (Rhesus macaque) protein is Lysozyme C (LYZ).